We begin with the raw amino-acid sequence, 154 residues long: Dau c 1 isoallergen Dau c 1.0301 (154 aa).

Belongs to the BetVI family. In terms of tissue distribution, expressed in roots.

This chain is Dau c 1 isoallergen Dau c 1.0301, found in Daucus carota (Wild carrot).